The following is a 248-amino-acid chain: Probable transcriptional regulatory protein Pcar_2335 (248 aa).

Belongs to the TACO1 family.

It localises to the cytoplasm. This Syntrophotalea carbinolica (strain DSM 2380 / NBRC 103641 / GraBd1) (Pelobacter carbinolicus) protein is Probable transcriptional regulatory protein Pcar_2335.